The primary structure comprises 358 residues: MSQAVKIELRETLKEKPDTSQLGFGKYFTDYMLSYDYDADKGWHDLKIVPYGPIEISPAAQGVHYGQSVFEGLKAYKKDGEVALFRPDENFKRLNNSLARLEMPQVNEGELLEGLKQLVDLEREWVPEGEGQSLYIRPFVFATEGVLGVGASHQYKLLIILSPSGAYYGGETLKPTKIYVEDEYVRAVRGGVGFAKVAGNYAASLLAQTNANKLGYDQVLWLDGVEQKYIEEVGSMNIFFVENGKVITPELNGSILPGITRKSIIELAKNLGYEVEERRVSIDELFESYDKGELTEVFGSGTAAVISPVGTLRYEDREIVINNNETGEITQKLYDVYTGIQNGTLEDKNGWRVVVPKY.

Lys-196 bears the N6-(pyridoxal phosphate)lysine mark.

This sequence belongs to the class-IV pyridoxal-phosphate-dependent aminotransferase family. It depends on pyridoxal 5'-phosphate as a cofactor.

The enzyme catalyses L-leucine + 2-oxoglutarate = 4-methyl-2-oxopentanoate + L-glutamate. The catalysed reaction is L-isoleucine + 2-oxoglutarate = (S)-3-methyl-2-oxopentanoate + L-glutamate. It catalyses the reaction L-valine + 2-oxoglutarate = 3-methyl-2-oxobutanoate + L-glutamate. The protein operates within amino-acid biosynthesis; L-isoleucine biosynthesis; L-isoleucine from 2-oxobutanoate: step 4/4. Its pathway is amino-acid biosynthesis; L-leucine biosynthesis; L-leucine from 3-methyl-2-oxobutanoate: step 4/4. It functions in the pathway amino-acid biosynthesis; L-valine biosynthesis; L-valine from pyruvate: step 4/4. Its function is as follows. Acts on leucine, isoleucine and valine. This Staphylococcus aureus (strain MRSA252) protein is Probable branched-chain-amino-acid aminotransferase (ilvE).